The chain runs to 89 residues: Small ribosomal subunit protein uS15 (89 aa).

It belongs to the universal ribosomal protein uS15 family. In terms of assembly, part of the 30S ribosomal subunit. Forms a bridge to the 50S subunit in the 70S ribosome, contacting the 23S rRNA.

In terms of biological role, one of the primary rRNA binding proteins, it binds directly to 16S rRNA where it helps nucleate assembly of the platform of the 30S subunit by binding and bridging several RNA helices of the 16S rRNA. Its function is as follows. Forms an intersubunit bridge (bridge B4) with the 23S rRNA of the 50S subunit in the ribosome. The sequence is that of Small ribosomal subunit protein uS15 from Janthinobacterium sp. (strain Marseille) (Minibacterium massiliensis).